Reading from the N-terminus, the 75-residue chain is MKPEIHPKYTKVTVNCANCGTTFETRSTRNNNIKVDICSKCHPFYTGKQVLVDTAGRVDRFNKRFAKAAPKASAQ.

It belongs to the bacterial ribosomal protein bL31 family. Type A subfamily. As to quaternary structure, part of the 50S ribosomal subunit.

Functionally, binds the 23S rRNA. The chain is Large ribosomal subunit protein bL31 from Chlorobaculum tepidum (strain ATCC 49652 / DSM 12025 / NBRC 103806 / TLS) (Chlorobium tepidum).